We begin with the raw amino-acid sequence, 711 residues long: Polyribonucleotide nucleotidyltransferase (711 aa).

The Mg(2+) site is built by D487 and D493. The region spanning 554–613 (PRIHTMKISAEKIKDVIGKGGAVIRALTEETGTTIEIEDDGTIKIAATEGAAAKEAIRRI) is the KH domain. The S1 motif domain maps to 623 to 691 (GRIYTGKVAR…RQGRVRLSMK (69 aa)). Residues 691 to 711 (KEAVEKPAEEAAAEAPAAKEE) are disordered.

Belongs to the polyribonucleotide nucleotidyltransferase family. As to quaternary structure, component of the RNA degradosome, which is a multiprotein complex involved in RNA processing and mRNA degradation. The cofactor is Mg(2+).

It is found in the cytoplasm. The catalysed reaction is RNA(n+1) + phosphate = RNA(n) + a ribonucleoside 5'-diphosphate. Involved in mRNA degradation. Catalyzes the phosphorolysis of single-stranded polyribonucleotides processively in the 3'- to 5'-direction. The chain is Polyribonucleotide nucleotidyltransferase from Vibrio parahaemolyticus serotype O3:K6 (strain RIMD 2210633).